Here is a 1607-residue protein sequence, read N- to C-terminus: Dicer-like protein 1 (1607 aa).

Residues 1–74 (MNAEMREGSS…PDTKKWIVND (74 aa)) form a disordered region. One can recognise a Helicase ATP-binding domain in the interval 142-324 (LFERAKTQNT…IARSPELEGL (183 aa)). 155-162 (LDTGSGKT) lines the ATP pocket. The short motif at 267-270 (DEAH) is the DEAH box element. One can recognise a Helicase C-terminal domain in the interval 461-632 (KVVILLRILR…EALPADRKLT (172 aa)). The 91-residue stretch at 665–755 (SLICLAAFVA…RPTFTKQLPA (91 aa)) folds into the Dicer dsRNA-binding fold domain. Residues 905–1040 (GAVTFVRDNE…IVLEPLRISP (136 aa)) enclose the PAZ domain. RNase III domains follow at residues 1063–1219 (LVAL…LTAQ) and 1272–1447 (AARF…VDSR). Mg(2+) is bound by residues Glu1312, Asp1433, and Glu1436. A DRBM domain is found at 1478–1556 (HPVTFLAGIM…AKKAIQVLEG (79 aa)). Residues Cys1493, His1527, Cys1568, and Cys1570 each coordinate Zn(2+).

The protein belongs to the helicase family. Dicer subfamily. Mg(2+) serves as cofactor. It depends on Mn(2+) as a cofactor.

Its function is as follows. Dicer-like endonuclease involved in cleaving double-stranded RNA in the RNA interference (RNAi) pathway. Produces 21 to 25 bp dsRNAs (siRNAs) which target the selective destruction of homologous RNAs leading to sequence-specific suppression of gene expression, called post-transcriptional gene silencing (PTGS). Part of a broad host defense response against viral infection and transposons. In Chaetomium globosum (strain ATCC 6205 / CBS 148.51 / DSM 1962 / NBRC 6347 / NRRL 1970) (Soil fungus), this protein is Dicer-like protein 1 (DCL1).